A 295-amino-acid chain; its full sequence is MSASESQTQARLLAQALPFMQRYENKTIVVKYGGHAMGDAELGRAFAADIALLKQSGVNPIVVHGGGPQIGAMLTKMGIESKFEGGLRVTDQKTVEIVEMVLAGSINKEIVALINQTGEWAIGLCGKDGNMVFAEKAKKTVIDPDSHIERVLDLGFVGEVVEVDRTLLDLLAKSEMIPVIAPVAPGRDGHTYNINADTFAGAIAGALRADRLLFLTDVPGVLDKNGELFKELSVAQARALIKDGTISGGMIPKVETCIDAINAGVHGVVILNGKTAHSVLLEIFTEHGAGTLIVP.

Substrate contacts are provided by residues 66–67, Arg-88, and Asn-193; that span reads GG.

This sequence belongs to the acetylglutamate kinase family. ArgB subfamily.

It is found in the cytoplasm. It catalyses the reaction N-acetyl-L-glutamate + ATP = N-acetyl-L-glutamyl 5-phosphate + ADP. The protein operates within amino-acid biosynthesis; L-arginine biosynthesis; N(2)-acetyl-L-ornithine from L-glutamate: step 2/4. Catalyzes the ATP-dependent phosphorylation of N-acetyl-L-glutamate. This chain is Acetylglutamate kinase, found in Allorhizobium ampelinum (strain ATCC BAA-846 / DSM 112012 / S4) (Agrobacterium vitis (strain S4)).